The sequence spans 231 residues: Large ribosomal subunit protein uL1 (231 aa).

Belongs to the universal ribosomal protein uL1 family. As to quaternary structure, part of the 50S ribosomal subunit.

In terms of biological role, binds directly to 23S rRNA. The L1 stalk is quite mobile in the ribosome, and is involved in E site tRNA release. Protein L1 is also a translational repressor protein, it controls the translation of the L11 operon by binding to its mRNA. In Acidovorax ebreus (strain TPSY) (Diaphorobacter sp. (strain TPSY)), this protein is Large ribosomal subunit protein uL1.